Here is a 525-residue protein sequence, read N- to C-terminus: Protein shisa-6 (525 aa).

The first 30 residues, methionine 1 to alanine 30, serve as a signal peptide directing secretion. The Extracellular segment spans residues alanine 31–threonine 180. N-linked (GlcNAc...) asparagine glycans are attached at residues asparagine 37 and asparagine 62. Residues asparagine 181–alanine 201 form a helical membrane-spanning segment. Residues lysine 202–valine 525 are Cytoplasmic-facing. The interval isoleucine 241 to proline 294 is disordered. Residues alanine 243–histidine 261 are compositionally biased toward polar residues. Residues serine 416, serine 422, and serine 434 each carry the phosphoserine modification. Threonine 458 carries the post-translational modification Phosphothreonine. Residues methionine 469 to phenylalanine 495 form a disordered region. Positions proline 473–alanine 489 are enriched in polar residues. Position 502 is a phosphothreonine (threonine 502). Positions glutamate 522–valine 525 match the PDZ-binding motif.

It belongs to the shisa family. As to quaternary structure, component of the postsynaptic hippocampal AMPA-type glutamate receptor (AMPAR) complex, at least composed of pore forming AMPAR subunits GRIA1, GRIA2 and GRIA3 and AMPAR auxiliary proteins SHISA6 and SHISA7. Interacts (via PDZ-binding motif) with DLG4/PSD-95 (via PDZ domain); the interaction is direct. In terms of processing, N-glycosylated. As to expression, highly expressed in cerebellum and hippocampal neurons: CA1 stratum oriens and stratum radiatum, CA3 stratum oriens and stratum lucidum, and the dentate gyrus polymorphic layer. Expressed in other brain structures including olfactory bulb, cortex, amygdala and midbrain (at protein level). Also expressed in a subset of spermatogonial stem cells. Also expressed in eye, heart, kidney, lung, muscle and spleen. Isoform 2: Specifically expressed in hippocampus.

Its subcellular location is the postsynaptic density membrane. In terms of biological role, involved in maintenance of high-frequency synaptic transmission at hippocampal CA3-CA1 synapses. Regulates AMPA-type glutamate receptor (AMPAR) immobilization at postsynaptic density keeping the channels in an activated state in the presence of glutamate and preventing synaptic depression. May play a role in self-renewal and differentiation of spermatogonial stem cells by inhibiting canonical Wnt signaling pathway. This is Protein shisa-6 from Mus musculus (Mouse).